The chain runs to 396 residues: Cell adhesion molecule 3 (396 aa).

Residues 1-22 (MGAPSALPLLLLLACSWAPGGA) form the signal peptide. Residues 23-124 (NLSQDDSQPW…VRTAKSLVTV (102 aa)) form the Ig-like V-type domain. At 23-328 (NLSQDDSQPW…PVPSSSSTYH (306 aa)) the chain is on the extracellular side. Disulfide bonds link Cys-48/Cys-108, Cys-150/Cys-207, and Cys-252/Cys-297. Ig-like C2-type domains follow at residues 128–226 (PQKP…QRIE) and 231–313 (PTAM…FTLN). Asn-288 carries an N-linked (GlcNAc...) asparagine glycan. Residues 329–349 (AIIGGIVAFIVFLLLILLIFL) form a helical membrane-spanning segment. Over 350-396 (GHYLIRHKGTYLTHEAKGSDDAPDADTAIINAEGGQSGGDDKKEYFI) the chain is Cytoplasmic. The disordered stretch occupies residues 365–396 (AKGSDDAPDADTAIINAEGGQSGGDDKKEYFI). A Phosphoserine modification is found at Ser-386.

This sequence belongs to the nectin family. As to quaternary structure, homodimer. Can form trans-heterodimers with NECTIN3. Interacts with EPB41L1, DLG3, PALS2 and CASK. In terms of tissue distribution, mainly expressed in brain, in neuronal cell bodies of cerebellum, cortex, hippocampus, hypothalamus and spinal cord. In spinal cord predominantly expressed in motor neurons. Expressed in axons, presynaptic nerve terminals, glia cell processes.

It localises to the cell membrane. It is found in the cell junction. In terms of biological role, involved in cell-cell adhesion. Has both calcium-independent homophilic cell-cell adhesion activity and calcium-independent heterophilic cell-cell adhesion activity with IGSF4, NECTIN1 and NECTIN3. Interaction with EPB41L1 may regulate structure or function of cell-cell junctions. This Mus musculus (Mouse) protein is Cell adhesion molecule 3 (Cadm3).